A 484-amino-acid polypeptide reads, in one-letter code: Probable cytosol aminopeptidase (484 aa).

2 residues coordinate Mn(2+): Lys256 and Asp261. The active site involves Lys268. Mn(2+)-binding residues include Asp279, Asp338, and Glu340. Residue Arg342 is part of the active site.

This sequence belongs to the peptidase M17 family. Mn(2+) is required as a cofactor.

It is found in the cytoplasm. The catalysed reaction is Release of an N-terminal amino acid, Xaa-|-Yaa-, in which Xaa is preferably Leu, but may be other amino acids including Pro although not Arg or Lys, and Yaa may be Pro. Amino acid amides and methyl esters are also readily hydrolyzed, but rates on arylamides are exceedingly low.. It catalyses the reaction Release of an N-terminal amino acid, preferentially leucine, but not glutamic or aspartic acids.. Functionally, presumably involved in the processing and regular turnover of intracellular proteins. Catalyzes the removal of unsubstituted N-terminal amino acids from various peptides. In Actinobacillus succinogenes (strain ATCC 55618 / DSM 22257 / CCUG 43843 / 130Z), this protein is Probable cytosol aminopeptidase.